Consider the following 205-residue polypeptide: Small ribosomal subunit protein uS4 (205 aa).

Residues 1 to 16 (MSKRESSKYKIDRRMG) are compositionally biased toward basic and acidic residues. Residues 1–46 (MSKRESSKYKIDRRMGENIWGRPKSPVNRREYGPGQHGQRRKGKLS) are disordered. The 64-residue stretch at 94 to 157 (SRLDAIVYRA…KQLVIVLESV (64 aa)) folds into the S4 RNA-binding domain.

It belongs to the universal ribosomal protein uS4 family. As to quaternary structure, part of the 30S ribosomal subunit. Contacts protein S5. The interaction surface between S4 and S5 is involved in control of translational fidelity.

Its function is as follows. One of the primary rRNA binding proteins, it binds directly to 16S rRNA where it nucleates assembly of the body of the 30S subunit. With S5 and S12 plays an important role in translational accuracy. This is Small ribosomal subunit protein uS4 from Rhizobium rhizogenes (strain K84 / ATCC BAA-868) (Agrobacterium radiobacter).